A 358-amino-acid polypeptide reads, in one-letter code: Putative inhibitor of apoptosis (358 aa).

2 BIR repeats span residues 4–70 and 90–157; these read EKDR…CPFL and YAAR…CEYL. Zn(2+)-binding residues include Cys-127, Cys-130, His-147, and Cys-154. One can recognise a CARD domain in the interval 193-283; it reads EPPNDLSLIR…MLYKHLFVQQ (91 aa). The RING-type zinc finger occupies 311–346; the sequence is CKVCMDKEVSIVFIPCGHLVVCKDCAPSLRKCPICR.

The protein belongs to the IAP family.

The polypeptide is Putative inhibitor of apoptosis (PIAP) (Sus scrofa (Pig)).